The chain runs to 578 residues: Sulfite reductase [NADPH] hemoprotein beta-component (578 aa).

Residues 1 to 21 are disordered; it reads MTNTLAGPDRSRDISQPLEKL. Residues Cys-443, Cys-449, Cys-488, and Cys-492 each coordinate [4Fe-4S] cluster. Cys-492 is a binding site for siroheme.

It belongs to the nitrite and sulfite reductase 4Fe-4S domain family. As to quaternary structure, alpha(8)-beta(8). The alpha component is a flavoprotein, the beta component is a hemoprotein. Siroheme serves as cofactor. [4Fe-4S] cluster is required as a cofactor.

It catalyses the reaction hydrogen sulfide + 3 NADP(+) + 3 H2O = sulfite + 3 NADPH + 4 H(+). It participates in sulfur metabolism; hydrogen sulfide biosynthesis; hydrogen sulfide from sulfite (NADPH route): step 1/1. Component of the sulfite reductase complex that catalyzes the 6-electron reduction of sulfite to sulfide. This is one of several activities required for the biosynthesis of L-cysteine from sulfate. The polypeptide is Sulfite reductase [NADPH] hemoprotein beta-component (Methylocella silvestris (strain DSM 15510 / CIP 108128 / LMG 27833 / NCIMB 13906 / BL2)).